A 106-amino-acid polypeptide reads, in one-letter code: Small ribosomal subunit protein uS17 (106 aa).

The protein belongs to the universal ribosomal protein uS17 family. As to quaternary structure, part of the 30S ribosomal subunit.

One of the primary rRNA binding proteins, it binds specifically to the 5'-end of 16S ribosomal RNA. The chain is Small ribosomal subunit protein uS17 from Picrophilus torridus (strain ATCC 700027 / DSM 9790 / JCM 10055 / NBRC 100828 / KAW 2/3).